Reading from the N-terminus, the 397-residue chain is DNA excision repair protein ERCC-8 (397 aa).

WD repeat units lie at residues Ile-41 to His-81, Val-97 to Val-137, Gly-184 to Leu-224, Ala-243 to Val-282, and Gly-332 to Asp-371. Residues Ser-391, Ser-392, and Ser-393 each carry the phosphoserine modification.

As to quaternary structure, part of the CSA complex (also named DCX(ERCC8) complex), a DCX E3 ubiquitin-protein ligase complex containing ERCC8, RBX1, DDB1 and CUL4A; the CSA complex interacts with RNA polymerase II; upon UV irradiation it interacts with the COP9 signalosome and preferentially with the hyperphosphorylated form of RNA polymerase II. Interacts with ERCC6/CSB (via CIM motif); promoting recruitment to lesion-stalled RNA polymerase II (Pol II). Interacts with KIAA1530/UVSSA. Interacts with a subunit of RNA polymerase II TFIIH.

Its subcellular location is the nucleus. The protein localises to the chromosome. It is found in the nucleus matrix. It functions in the pathway protein modification; protein ubiquitination. In terms of biological role, substrate-recognition component of the CSA complex, a DCX (DDB1-CUL4-X-box) E3 ubiquitin-protein ligase complex, involved in transcription-coupled nucleotide excision repair (TC-NER), a process during which RNA polymerase II-blocking lesions are rapidly removed from the transcribed strand of active genes. Following recruitment to lesion-stalled RNA polymerase II (Pol II), the CSA complex mediates ubiquitination of Pol II subunit POLR2A/RPB1 at 'Lys-1268', a critical TC-NER checkpoint, governing RNA Pol II stability and initiating DNA damage excision by TFIIH recruitment. The CSA complex also promotes the ubiquitination and subsequent proteasomal degradation of ERCC6/CSB in a UV-dependent manner; ERCC6 degradation is essential for the recovery of RNA synthesis after transcription-coupled repair. Also plays a role in DNA double-strand breaks (DSSBs) repair by non-homologous end joining (NHEJ). The polypeptide is DNA excision repair protein ERCC-8 (Mus musculus (Mouse)).